The sequence spans 1390 residues: DNA-directed RNA polymerase subunit beta' (1390 aa).

Zn(2+) is bound by residues C73, C75, C88, and C91. Mg(2+) is bound by residues D464, D466, and D468. The Zn(2+) site is built by C810, C884, C891, and C894. The interval 1365–1390 (EKKEQKIYGNGEEPAKEQKWIPQAGT) is disordered.

Belongs to the RNA polymerase beta' chain family. The RNAP catalytic core consists of 2 alpha, 1 beta, 1 beta' and 1 omega subunit. When a sigma factor is associated with the core the holoenzyme is formed, which can initiate transcription. Mg(2+) serves as cofactor. Requires Zn(2+) as cofactor.

The catalysed reaction is RNA(n) + a ribonucleoside 5'-triphosphate = RNA(n+1) + diphosphate. DNA-dependent RNA polymerase catalyzes the transcription of DNA into RNA using the four ribonucleoside triphosphates as substrates. The polypeptide is DNA-directed RNA polymerase subunit beta' (Methylacidiphilum infernorum (isolate V4) (Methylokorus infernorum (strain V4))).